The following is a 154-amino-acid chain: Superoxide dismutase [Cu-Zn] (154 aa).

Positions 47 and 64 each coordinate Cu cation. A disulfide bridge links Cys58 with Cys147. The Zn(2+) site is built by His64, His72, His81, and Asp84. His121 provides a ligand contact to Cu cation. Substrate is bound at residue Arg144.

This sequence belongs to the Cu-Zn superoxide dismutase family. As to quaternary structure, homodimer. Cu cation serves as cofactor. The cofactor is Zn(2+).

It localises to the cytoplasm. It catalyses the reaction 2 superoxide + 2 H(+) = H2O2 + O2. Its function is as follows. Destroys radicals which are normally produced within the cells and which are toxic to biological systems. The protein is Superoxide dismutase [Cu-Zn] (SOD1) of Pleurocordyceps sinensis (Polycephalomyces sinensis).